A 121-amino-acid polypeptide reads, in one-letter code: Small ribosomal subunit protein uS13 (121 aa).

The tract at residues 93–121 is disordered; that stretch reads RGLPMRGQRTRTNARTRKGPRKAAQSLKK.

This sequence belongs to the universal ribosomal protein uS13 family. As to quaternary structure, part of the 30S ribosomal subunit. Forms a loose heterodimer with protein S19. Forms two bridges to the 50S subunit in the 70S ribosome.

Its function is as follows. Located at the top of the head of the 30S subunit, it contacts several helices of the 16S rRNA. In the 70S ribosome it contacts the 23S rRNA (bridge B1a) and protein L5 of the 50S subunit (bridge B1b), connecting the 2 subunits; these bridges are implicated in subunit movement. Contacts the tRNAs in the A and P-sites. This is Small ribosomal subunit protein uS13 from Albidiferax ferrireducens (strain ATCC BAA-621 / DSM 15236 / T118) (Rhodoferax ferrireducens).